We begin with the raw amino-acid sequence, 276 residues long: Adenylate kinase (276 aa).

38–43 (GSGKGT) contributes to the ATP binding site. Residues 58 to 87 (STGDMLRAAIEQGTETGKQAKTIMDQGGLV) form an NMP region. AMP is bound by residues T59, R64, 85–87 (GLV), 113–116 (GFPR), and Q120. An LID region spans residues 154–191 (GRLVHPSSGRSYHREFFPPKVDMIDDITGEPLIQRSDD). Residues R155 and 164–165 (SY) each bind ATP. AMP-binding residues include R188 and R199. Position 227 (K227) interacts with ATP.

It belongs to the adenylate kinase family. AK2 subfamily. In terms of assembly, monomer.

It is found in the cytoplasm. The protein resides in the cytosol. Its subcellular location is the mitochondrion intermembrane space. It carries out the reaction AMP + ATP = 2 ADP. Functionally, catalyzes the reversible transfer of the terminal phosphate group between ATP and AMP. Plays an important role in cellular energy homeostasis and in adenine nucleotide metabolism. Adenylate kinase activity is critical for regulation of the phosphate utilization and the AMP de novo biosynthesis pathways. This chain is Adenylate kinase (adkA), found in Dictyostelium discoideum (Social amoeba).